The chain runs to 509 residues: MDIRAAEISAILKEQIKNFGQEAEVTEVGQVLSVGDGIARVYGLDNVQAGEMVEFESGVRGMALNLEQDNVGVVIFGVDRDIKEGQTVKRTGAIVDVPVGKGLLGRVVDALGNPIDGKGPIVSTERRRVDVKAPGIIPRKSVHEPMATGLKSVDALIPIGRGQRELIIGDRQTGKTAIALDTILNQKPAHEGTDEKAKLYCVYVAVGQKRSTVAQFVKVLEDNGALDYSIVIAATASDPAPMQFLAPFSGCAMGEFFRDNGMHAVIIYDDLSKQAVAYRQMSLLLRRPPGREAYPGDVFYLHSRLLERAAKMGDAAGAGSLTALPVIETQANDVSAYIPTNVISITDGQIFLETDLFYQGVRPAVNVGLSVSRVGSAAQTKAMKKVAGKIKGELAQYREMAAFAQFGSDLDAATQRLLNRGSRLTELLKQPQFSPLKMEEQVAVIYAGVNGYLDAIPVNRVRAFEDGLLSTLRGRHADLLETIRTSKDLGDDAAAKLKGVVESFAKSFS.

169–176 (GDRQTGKT) serves as a coordination point for ATP.

This sequence belongs to the ATPase alpha/beta chains family. F-type ATPases have 2 components, CF(1) - the catalytic core - and CF(0) - the membrane proton channel. CF(1) has five subunits: alpha(3), beta(3), gamma(1), delta(1), epsilon(1). CF(0) has three main subunits: a(1), b(2) and c(9-12). The alpha and beta chains form an alternating ring which encloses part of the gamma chain. CF(1) is attached to CF(0) by a central stalk formed by the gamma and epsilon chains, while a peripheral stalk is formed by the delta and b chains.

The protein localises to the cell inner membrane. The catalysed reaction is ATP + H2O + 4 H(+)(in) = ADP + phosphate + 5 H(+)(out). Functionally, produces ATP from ADP in the presence of a proton gradient across the membrane. The alpha chain is a regulatory subunit. The chain is ATP synthase subunit alpha from Methylobacterium sp. (strain 4-46).